The chain runs to 217 residues: Probable transaldolase (217 aa).

K83 serves as the catalytic Schiff-base intermediate with substrate.

Belongs to the transaldolase family. Type 3B subfamily.

The protein localises to the cytoplasm. It catalyses the reaction D-sedoheptulose 7-phosphate + D-glyceraldehyde 3-phosphate = D-erythrose 4-phosphate + beta-D-fructose 6-phosphate. The protein operates within carbohydrate degradation; pentose phosphate pathway; D-glyceraldehyde 3-phosphate and beta-D-fructose 6-phosphate from D-ribose 5-phosphate and D-xylulose 5-phosphate (non-oxidative stage): step 2/3. Functionally, transaldolase is important for the balance of metabolites in the pentose-phosphate pathway. This chain is Probable transaldolase, found in Sinorhizobium medicae (strain WSM419) (Ensifer medicae).